We begin with the raw amino-acid sequence, 141 residues long: Regulator of ribonuclease activity B (141 aa).

The span at 119 to 132 (DEDFDDEDDDEDYD) shows a compositional bias: acidic residues. The segment at 119–141 (DEDFDDEDDDEDYDKDGFPIERH) is disordered.

It belongs to the RraB family. Interacts with the C-terminal region of Rne.

Its subcellular location is the cytoplasm. Globally modulates RNA abundance by binding to RNase E (Rne) and regulating its endonucleolytic activity. Can modulate Rne action in a substrate-dependent manner by altering the composition of the degradosome. This is Regulator of ribonuclease activity B from Shewanella amazonensis (strain ATCC BAA-1098 / SB2B).